The following is a 131-amino-acid chain: Large ribosomal subunit protein bL17 (131 aa).

It belongs to the bacterial ribosomal protein bL17 family. Part of the 50S ribosomal subunit. Contacts protein L32.

The sequence is that of Large ribosomal subunit protein bL17 from Nitrosospira multiformis (strain ATCC 25196 / NCIMB 11849 / C 71).